The primary structure comprises 342 residues: UDP-N-acetylglucosamine--N-acetylmuramyl-(pentapeptide) pyrophosphoryl-undecaprenol N-acetylglucosamine transferase (342 aa).

Residues 10–12, asparagine 124, serine 177, and glutamine 275 each bind UDP-N-acetyl-alpha-D-glucosamine; that span reads TGG.

It belongs to the glycosyltransferase 28 family. MurG subfamily.

It localises to the cell inner membrane. The enzyme catalyses di-trans,octa-cis-undecaprenyl diphospho-N-acetyl-alpha-D-muramoyl-L-alanyl-D-glutamyl-meso-2,6-diaminopimeloyl-D-alanyl-D-alanine + UDP-N-acetyl-alpha-D-glucosamine = di-trans,octa-cis-undecaprenyl diphospho-[N-acetyl-alpha-D-glucosaminyl-(1-&gt;4)]-N-acetyl-alpha-D-muramoyl-L-alanyl-D-glutamyl-meso-2,6-diaminopimeloyl-D-alanyl-D-alanine + UDP + H(+). It functions in the pathway cell wall biogenesis; peptidoglycan biosynthesis. In terms of biological role, cell wall formation. Catalyzes the transfer of a GlcNAc subunit on undecaprenyl-pyrophosphoryl-MurNAc-pentapeptide (lipid intermediate I) to form undecaprenyl-pyrophosphoryl-MurNAc-(pentapeptide)GlcNAc (lipid intermediate II). The protein is UDP-N-acetylglucosamine--N-acetylmuramyl-(pentapeptide) pyrophosphoryl-undecaprenol N-acetylglucosamine transferase of Campylobacter jejuni (strain RM1221).